Here is a 168-residue protein sequence, read N- to C-terminus: Ribosome maturation factor RimP (168 aa).

This sequence belongs to the RimP family.

Its subcellular location is the cytoplasm. Required for maturation of 30S ribosomal subunits. This is Ribosome maturation factor RimP from Mycoplasma mobile (strain ATCC 43663 / 163K / NCTC 11711) (Mesomycoplasma mobile).